We begin with the raw amino-acid sequence, 282 residues long: Pantothenate synthetase (282 aa).

30 to 37 (MGNLHLGH) is an ATP binding site. His37 serves as the catalytic Proton donor. Gln61 serves as a coordination point for (R)-pantoate. Gln61 serves as a coordination point for beta-alanine. Residue 149 to 152 (GQKD) participates in ATP binding. Gln155 contributes to the (R)-pantoate binding site. Residues Ile178 and 186–189 (MSSR) contribute to the ATP site.

The protein belongs to the pantothenate synthetase family. In terms of assembly, homodimer.

It is found in the cytoplasm. It carries out the reaction (R)-pantoate + beta-alanine + ATP = (R)-pantothenate + AMP + diphosphate + H(+). It participates in cofactor biosynthesis; (R)-pantothenate biosynthesis; (R)-pantothenate from (R)-pantoate and beta-alanine: step 1/1. Its function is as follows. Catalyzes the condensation of pantoate with beta-alanine in an ATP-dependent reaction via a pantoyl-adenylate intermediate. This chain is Pantothenate synthetase, found in Shewanella piezotolerans (strain WP3 / JCM 13877).